The primary structure comprises 722 residues: Mating-type switching protein swi2 (722 aa).

Disordered stretches follow at residues M1–S35 and S301–S342. The span at S9–N22 shows a compositional bias: polar residues. Residues E302–P316 show a composition bias toward acidic residues. A compositionally biased stretch (polar residues) spans T319–P332.

In terms of assembly, interacts with swi5 and rhp51.

Functionally, required for normal mating-type switching. The sequence is that of Mating-type switching protein swi2 (swi2) from Schizosaccharomyces pombe (strain 972 / ATCC 24843) (Fission yeast).